The following is a 671-amino-acid chain: DNA ligase (671 aa).

NAD(+) contacts are provided by residues 34–38 (DSEYD), 83–84 (SL), and Glu113. The N6-AMP-lysine intermediate role is filled by Lys115. Positions 136, 170, 286, and 310 each coordinate NAD(+). The Zn(2+) site is built by Cys404, Cys407, Cys422, and Cys427. A BRCT domain is found at 590 to 671 (EEAGVFAGKT…FTQAVEQSEQ (82 aa)).

This sequence belongs to the NAD-dependent DNA ligase family. LigA subfamily. The cofactor is Mg(2+). Requires Mn(2+) as cofactor.

The enzyme catalyses NAD(+) + (deoxyribonucleotide)n-3'-hydroxyl + 5'-phospho-(deoxyribonucleotide)m = (deoxyribonucleotide)n+m + AMP + beta-nicotinamide D-nucleotide.. Its function is as follows. DNA ligase that catalyzes the formation of phosphodiester linkages between 5'-phosphoryl and 3'-hydroxyl groups in double-stranded DNA using NAD as a coenzyme and as the energy source for the reaction. It is essential for DNA replication and repair of damaged DNA. The chain is DNA ligase from Shouchella clausii (strain KSM-K16) (Alkalihalobacillus clausii).